Consider the following 1259-residue polypeptide: Protein retinal degeneration B (1259 aa).

A disordered region spans residues 268-378 (GGGEECSDDS…SKGALHSPVG (111 aa)). A phosphoserine mark is found at Ser-274 and Ser-277. Low complexity predominate over residues 284 to 293 (STAATAASTT). A compositionally biased stretch (acidic residues) spans 318–335 (SSDEEGEEEEDDDEDEND). Positions 347-363 (QGGSAQRSRSQSIQMAQ) are enriched in low complexity. Phosphoserine is present on residues Ser-401, Ser-403, and Ser-434. Disordered stretches follow at residues 427–454 (LLGE…GNSR), 472–500 (RGNK…STPS), and 660–692 (SQPG…NSRL). The span at 663 to 678 (GTASGASNSGGDAATN) shows a compositional bias: low complexity. A compositionally biased stretch (polar residues) spans 679–689 (INTHNPLSPRN). One can recognise a DDHD domain in the interval 730 to 913 (LDFEVCDFFM…IAFILRQIGK (184 aa)).

This sequence belongs to the PtdIns transfer protein family. PI transfer class IIA subfamily. As to expression, expressed in adult heads, not detected in bodies.

It catalyses the reaction a 1,2-diacyl-sn-glycero-3-phospho-(1D-myo-inositol)(in) = a 1,2-diacyl-sn-glycero-3-phospho-(1D-myo-inositol)(out). The enzyme catalyses a 1,2-diacyl-sn-glycero-3-phosphate(in) = a 1,2-diacyl-sn-glycero-3-phosphate(out). Functionally, catalyzes the transfer of phosphatidylinositol (PI) and phosphatidic acid (PA) between membranes. May control phosphatidylinositol concentration in transport vesicles from the subrhabdomeric cisternae (SRC) to the rhabdomere. May function as a calcium transporter. The sequence is that of Protein retinal degeneration B (rdgB) from Drosophila melanogaster (Fruit fly).